The sequence spans 446 residues: tRNA modification GTPase MnmE (446 aa).

(6S)-5-formyl-5,6,7,8-tetrahydrofolate contacts are provided by Arg-22, Glu-80, and Lys-119. Residues 215 to 370 (GLSLVIAGRP…LKKVIKQVVG (156 aa)) enclose the TrmE-type G domain. Asn-225 contributes to the K(+) binding site. GTP-binding positions include 225–230 (NAGKST), 244–250 (TEIAGTT), and 269–272 (DTAG). Ser-229 serves as a coordination point for Mg(2+). Residues Thr-244, Ile-246, and Thr-249 each coordinate K(+). Thr-250 is a Mg(2+) binding site. Lys-446 is a (6S)-5-formyl-5,6,7,8-tetrahydrofolate binding site.

The protein belongs to the TRAFAC class TrmE-Era-EngA-EngB-Septin-like GTPase superfamily. TrmE GTPase family. In terms of assembly, homodimer. Heterotetramer of two MnmE and two MnmG subunits. It depends on K(+) as a cofactor.

Its subcellular location is the cytoplasm. Functionally, exhibits a very high intrinsic GTPase hydrolysis rate. Involved in the addition of a carboxymethylaminomethyl (cmnm) group at the wobble position (U34) of certain tRNAs, forming tRNA-cmnm(5)s(2)U34. This is tRNA modification GTPase MnmE from Legionella pneumophila (strain Paris).